The sequence spans 196 residues: Holliday junction branch migration complex subunit RuvA (196 aa).

Residues 1–65 (MIGNLSGTVD…ENTTQLYGFI (65 aa)) form a domain I region. Residues 66–143 (NKEEQSCLRL…KLETNNNNFY (78 aa)) form a domain II region. Residues 144–147 (PINE) form a flexible linker region. The interval 147-196 (EDAVSALINLGYEKTKVYDTIKKYKPNLDTKDIIRTALKELSNYEIDIMQ) is domain III.

The protein belongs to the RuvA family. Homotetramer. Forms an RuvA(8)-RuvB(12)-Holliday junction (HJ) complex. HJ DNA is sandwiched between 2 RuvA tetramers; dsDNA enters through RuvA and exits via RuvB. An RuvB hexamer assembles on each DNA strand where it exits the tetramer. Each RuvB hexamer is contacted by two RuvA subunits (via domain III) on 2 adjacent RuvB subunits; this complex drives branch migration. In the full resolvosome a probable DNA-RuvA(4)-RuvB(12)-RuvC(2) complex forms which resolves the HJ.

The protein localises to the cytoplasm. Its function is as follows. The RuvA-RuvB-RuvC complex processes Holliday junction (HJ) DNA during genetic recombination and DNA repair, while the RuvA-RuvB complex plays an important role in the rescue of blocked DNA replication forks via replication fork reversal (RFR). RuvA specifically binds to HJ cruciform DNA, conferring on it an open structure. The RuvB hexamer acts as an ATP-dependent pump, pulling dsDNA into and through the RuvAB complex. HJ branch migration allows RuvC to scan DNA until it finds its consensus sequence, where it cleaves and resolves the cruciform DNA. This Wolbachia sp. subsp. Brugia malayi (strain TRS) protein is Holliday junction branch migration complex subunit RuvA.